A 334-amino-acid chain; its full sequence is Ephrin-B1 (334 aa).

Positions 1-25 (MARPRGGRWLLGVLLALCRLAAPLA) are cleaved as a signal peptide. Residues 26–160 (KSLEPVSWSA…TRSMKIVMKV (135 aa)) enclose the Ephrin RBD domain. Residues 26–231 (KSLEPVSWSA…FLSSKVAVFA (206 aa)) are Extracellular-facing. 2 disulfide bridges follow: C60–C97 and C85–C149. N135 carries an N-linked (GlcNAc...) asparagine glycan. The tract at residues 175 to 218 (SRPSKEADNTVKIVTQSPRHKVPTVEEPGKPGSVNQNGQETQGP) is disordered. Residues 207–218 (SVNQNGQETQGP) show a composition bias toward polar residues. The chain crosses the membrane as a helical span at residues 232–252 (AIGAGCVIFILIIIFLVVLLI). At 253-334 (KIRKRHRKHT…QSPANIYYKV (82 aa)) the chain is on the cytoplasmic side. Residues 332–334 (YKV) carry the PDZ-binding motif.

It belongs to the ephrin family. As to quaternary structure, binds to the receptor tyrosine kinase EPHB2. Interacts with GRIP1 and GRIP2. Inducible phosphorylation of tyrosine residues in the cytoplasmic domain.

The protein localises to the membrane. Functionally, cell surface transmembrane ligand for Eph receptors, a family of receptor tyrosine kinases which are crucial for migration, repulsion and adhesion during neuronal, vascular and epithelial development. Binds promiscuously Eph receptors residing on adjacent cells, leading to contact-dependent bidirectional signaling into neighboring cells. The signaling pathway downstream of the receptor is referred to as forward signaling while the signaling pathway downstream of the ephrin ligand is referred to as reverse signaling. The polypeptide is Ephrin-B1 (EFNB1) (Gallus gallus (Chicken)).